A 406-amino-acid polypeptide reads, in one-letter code: Cholinephosphotransferase 1 (406 aa).

A2 is subject to N-acetylalanine. At 2–62 (AAGAGARPAP…LLQWIPLWMA (61 aa)) the chain is on the cytoplasmic side. A helical transmembrane segment spans residues 63-83 (PNSITLLGLAINMLTTLVLIS). N64 serves as a coordination point for CDP-choline. Residues 84–93 (YCPTVTEEAP) are Lumenal-facing. A helical transmembrane segment spans residues 94 to 118 (YWTYLLCALGLFIYQSLDAIDGKQA). Positions 111 and 114 each coordinate Mg(2+). CDP-choline is bound at residue R119. Residues 119 to 125 (RRTNSCS) are Cytoplasmic-facing. The chain crosses the membrane as a helical span at residues 126–150 (PLGELFDHGCDSLSTVFMAVGASIA). Position 132 (D132) interacts with Mg(2+). The Proton acceptor role is filled by H133. Residue D136 participates in Mg(2+) binding. Residues 151–160 (VRLGTHPDWL) lie on the Lumenal side of the membrane. Residues 161–179 (FFCSFIGMFMFYCAHWQTY) form a helical membrane-spanning segment. Residues 180–190 (VSGVLRFGKVD) lie on the Cytoplasmic side of the membrane. A helical transmembrane segment spans residues 191-207 (VTEIQIALVIVFVLSTF). Topologically, residues 208 to 222 (GGATMWDYTIPILEI) are lumenal. A helical membrane pass occupies residues 223-248 (KLKILPVLGVVGGAIFSCSNYFHVIL). Residues 249-265 (HGGVGKNGSTIAGTSVL) are Cytoplasmic-facing. Residues 266–281 (SPGLHIGIIIILAIMI) form a helical membrane-spanning segment. Residues 282 to 293 (YKKSATNLFEKH) lie on the Lumenal side of the membrane. The chain crosses the membrane as a helical span at residues 294–316 (PCLYTLMFGCVFAKVSQKLVIAH). At 317–329 (MTKSELYLQDTVF) the chain is on the cytoplasmic side. A helical transmembrane segment spans residues 330-339 (IGPGLLFLDQ). Residues 340 to 346 (YFNNFVD) lie on the Lumenal side of the membrane. Residues 347 to 376 (EYIVLWIAMVISSLDMMRYFSALCLQISRH) form a helical membrane-spanning segment. Residues 377–406 (LHLSIFKTSCHQAPEQVQVLPPKSHQNNMD) are Cytoplasmic-facing.

This sequence belongs to the CDP-alcohol phosphatidyltransferase class-I family. Mg(2+) is required as a cofactor. Requires Mn(2+) as cofactor.

The protein localises to the golgi apparatus membrane. It carries out the reaction CDP-choline + a 1,2-diacyl-sn-glycerol = a 1,2-diacyl-sn-glycero-3-phosphocholine + CMP + H(+). The catalysed reaction is 1-octadecanoyl-2-(5Z,8Z,11Z,14Z-eicosatetraenoyl)-sn-glycerol + CDP-choline = 1-octadecanoyl-2-(5Z,8Z,11Z,14Z-eicosatetraenoyl)-sn-glycero-3-phosphocholine + CMP + H(+). It catalyses the reaction 1-hexadecanoyl-2-(9Z-octadecenoyl)-sn-glycerol + CDP-choline = 1-hexadecanoyl-2-(9Z-octadecenoyl)-sn-glycero-3-phosphocholine + CMP + H(+). The enzyme catalyses 1-hexadecanoyl-2-(4Z,7Z,10Z,13Z,16Z,19Z-docosahexaenoyl)-sn-glycerol + CDP-choline = 1-hexadecanoyl-2-(4Z,7Z,10Z,13Z,16Z,19Z-docosahexaenoyl)-sn-glycero-3-phosphocholine + CMP + H(+). It carries out the reaction 1,2-dioctanoyl-sn-glycerol + CDP-choline = 1,2-dioctanoyl-sn-glycero-3-phosphocholine + CMP + H(+). It participates in phospholipid metabolism; phosphatidylcholine biosynthesis; phosphatidylcholine from phosphocholine: step 2/2. Its function is as follows. Catalyzes the final step of de novo phosphatidylcholine (PC) synthesis, i.e. the transfer of choline phosphate from CDP-choline to the free hydroxyl of a diacylglycerol (DAG), producing a PC. It thereby plays a central role in the formation and maintenance of vesicular membranes. In Bos taurus (Bovine), this protein is Cholinephosphotransferase 1 (CHPT1).